We begin with the raw amino-acid sequence, 228 residues long: Mitochondrial assembly of ribosomal large subunit protein 1 (228 aa).

The segment at 53 to 77 (SLTRGLHHGPQPEERTAGDARLQPG) is disordered.

This sequence belongs to the Iojap/RsfS family. In terms of assembly, associates with the mitochondrial ribosome large subunit (39S) via interaction with MRPL12 and/or MRPL14. The interaction generates steric hindrance that is expected to prevent premature association of the 28S and 39S ribosomal subunits. Identified in a complex composed of MALSU1, MIEF1 upstream open reading frame protein and NDUFAB1; within the trimeric complex, MIEF1 upstream open reading frame protein functions as a bridging scaffold that interacts with MALSU1 on one side, and with NDUFAB1 on the other side. Interacts with MRPL12 and MRPL14.

The protein resides in the mitochondrion matrix. Required for normal mitochondrial ribosome function and mitochondrial translation. May play a role in ribosome biogenesis by preventing premature association of the 28S and 39S ribosomal subunits. Interacts with mitochondrial ribosomal protein uL14m (MRPL14), probably blocking formation of intersubunit bridge B8, preventing association of the 28S and 39S ribosomal subunits. Addition to isolated mitochondrial ribosomal subunits partially inhibits translation, probably by interfering with the association of the 28S and 39S ribosomal subunits and the formation of functional ribosomes. May also participate in the assembly and/or regulation of the stability of the large subunit of the mitochondrial ribosome. May function as a ribosomal silencing factor. This is Mitochondrial assembly of ribosomal large subunit protein 1 (Malsu1) from Mus musculus (Mouse).